The sequence spans 255 residues: NAD kinase (255 aa).

The active-site Proton acceptor is the D44. NAD(+)-binding positions include 44–45, H49, 114–115, D144, A152, 155–160, and Q216; these read DG, NE, and SAYNLS.

This sequence belongs to the NAD kinase family. A divalent metal cation is required as a cofactor.

It is found in the cytoplasm. The catalysed reaction is NAD(+) + ATP = ADP + NADP(+) + H(+). Its function is as follows. Involved in the regulation of the intracellular balance of NAD and NADP, and is a key enzyme in the biosynthesis of NADP. Catalyzes specifically the phosphorylation on 2'-hydroxyl of the adenosine moiety of NAD to yield NADP. This is NAD kinase from Rickettsia bellii (strain OSU 85-389).